Here is a 328-residue protein sequence, read N- to C-terminus: Phosphoserine phosphatase (328 aa).

Asp113 serves as the catalytic Nucleophile. Residues Asp113 and Asp115 each coordinate Mg(2+). The active-site Proton donor is the Asp115. Substrate contacts are provided by residues Glu122, Arg158, Ser201–Gly202, and Lys246. Asp269 lines the Mg(2+) pocket. Substrate is bound at residue Asn272.

It belongs to the HAD-like hydrolase superfamily. SerB family. Mg(2+) is required as a cofactor.

It catalyses the reaction O-phospho-L-serine + H2O = L-serine + phosphate. It carries out the reaction O-phospho-D-serine + H2O = D-serine + phosphate. The protein operates within amino-acid biosynthesis; L-serine biosynthesis; L-serine from 3-phospho-D-glycerate: step 3/3. The polypeptide is Phosphoserine phosphatase (Vibrio cholerae serotype O1 (strain ATCC 39315 / El Tor Inaba N16961)).